Reading from the N-terminus, the 251-residue chain is Protein FAM216A (251 aa).

Residues 1-16 (MPNQGPVSDWTECSSS) are compositionally biased toward polar residues. The disordered stretch occupies residues 1–49 (MPNQGPVSDWTECSSSAEPPAVARAEGGGGGSAGHSYYQNSKDRIKDGH).

It belongs to the FAM216 family.

The polypeptide is Protein FAM216A (FAM216A) (Bos taurus (Bovine)).